The chain runs to 1184 residues: Protocadherin-12 (1184 aa).

A signal peptide spans 1 to 24; it reads MMQLLQLLLGLLGPGGYLFLLGDC. Over 25-718 the chain is Extracellular; the sequence is QEVTTLTVKY…PGALSMSMLT (694 aa). Cadherin domains lie at 28-135, 136-244, 245-352, 355-460, and 461-565; these read TTLT…QPRF, PKGE…SPAF, AESS…IPSI, TWAS…APVF, and EKSR…APEV. N-linked (GlcNAc...) asparagine glycosylation is present at asparagine 415. 3 N-linked (GlcNAc...) asparagine glycosylation sites follow: asparagine 582, asparagine 659, and asparagine 662. In terms of domain architecture, Cadherin 6 spans 600 to 711; that stretch reads PAGTDTPPLA…LRDSARKPGA (112 aa). A helical transmembrane segment spans residues 719-739; it reads VICLAVLLGIFGLILALFMSI. The Cytoplasmic segment spans residues 740-1184; the sequence is CRTEKKDNRA…RGSSSSSRCL (445 aa). Disordered stretches follow at residues 854–928 and 973–1023; these read RQRN…ESGP and QFQP…DPEE. Serine 859 bears the Phosphoserine mark. Over residues 1012 to 1023 the composition is skewed to acidic residues; it reads PEQEEGPLDPEE. The residue at position 1062 (serine 1062) is a Phosphoserine. The segment at 1153–1184 is disordered; the sequence is SAASGMKVQGDPGGKTGTEGKSRGSSSSSRCL. The span at 1175–1184 shows a compositional bias: low complexity; the sequence is RGSSSSSRCL.

Post-translationally, cleaved by ADAM10 close to the transmembrane domain to release the Protocadherin-12, secreted form in the serum. Cleavage results in reduced cellular adhesion in a cell migration assay. In terms of tissue distribution, expressed in highly vascularized tissues including the heart and placenta, but most tissues contain a low level of expression. Prominent expression in the spleen. Present in villous and extravillous trophoblast (at protein level).

The protein resides in the cell membrane. It is found in the cell junction. The protein localises to the secreted. Its function is as follows. Cellular adhesion molecule that may play an important role in cell-cell interactions at interendothelial junctions. Acts as a regulator of cell migration, probably via increasing cell-cell adhesion. Promotes homotypic calcium-dependent aggregation and adhesion and clusters at intercellular junctions. Unable to bind to catenins, weakly associates with the cytoskeleton. The protein is Protocadherin-12 of Homo sapiens (Human).